Consider the following 741-residue polypeptide: Cytosolic phospholipase A2 (741 aa).

In terms of domain architecture, C2 spans 1 to 116 (MSNIIVEHQY…KVAQMEHVTL (116 aa)). Residues 1 to 172 (MSNIIVEHQY…IKKLLKMENP (172 aa)) are phospholipid binding. 7 residues coordinate Ca(2+): Asp34, Thr35, Asp37, Asn59, Asp87, Ala88, and Asn89. One can recognise a PLA2c domain in the interval 132 to 729 (VCASTDLRFS…SLSEIENKKF (598 aa)). Ser223 serves as the catalytic Nucleophile. The disordered stretch occupies residues 406-453 (TSSSTMEEELEQIKPEHIVGDDSADNEEETQRGGTESADAEDERQRHA). Positions 416–425 (EQIKPEHIVG) are enriched in basic and acidic residues. Ser498 carries the phosphoserine; by MAPK modification. Residue Asp540 is the Proton acceptor of the active site.

Post-translationally, activated by phosphorylation on a serine residue.

Its subcellular location is the cytoplasm. The protein localises to the cytoplasmic vesicle. It catalyses the reaction a 1,2-diacyl-sn-glycero-3-phosphocholine + H2O = a 1-acyl-sn-glycero-3-phosphocholine + a fatty acid + H(+). The catalysed reaction is a 1-acyl-sn-glycero-3-phosphocholine + H2O = sn-glycerol 3-phosphocholine + a fatty acid + H(+). Stimulated by agonists such as ATP, EGF, thrombin and bradykinin as well as by cytosolic Ca(2+). In terms of biological role, selectively hydrolyzes arachidonyl phospholipids in the sn-2 position releasing arachidonic acid. Together with its lysophospholipid activity, it is implicated in the initiation of the inflammatory response. The sequence is that of Cytosolic phospholipase A2 (pla2g4a) from Danio rerio (Zebrafish).